Here is a 148-residue protein sequence, read N- to C-terminus: Vascular endothelial growth factor homolog (148 aa).

The first 25 residues, 1–25 (MKLTATLQVVVALLICMYNLPECVS), serve as a signal peptide directing secretion. Cystine bridges form between cysteine 46–cysteine 88, cysteine 77–cysteine 130, and cysteine 81–cysteine 132. A glycan (N-linked (GlcNAc...) asparagine; by host) is linked at asparagine 95.

It belongs to the PDGF/VEGF growth factor family. Homodimer; disulfide-linked.

It localises to the secreted. Its function is as follows. Induces endothelial proliferation. The chain is Vascular endothelial growth factor homolog from Orf virus (strain NZ7) (OV NZ-7).